Reading from the N-terminus, the 169-residue chain is MRVAVTGTPGTGKTTATGRLDTALDVAHLNDLVGTEGLYDGVDADRGSKIVDVDAVRDHFAGREDVLVESHLAHRLDDLDAVVVLRCAPETLATRLQDRGDSPEKAAENADSEALAIILSEAVRGHGADAVYEIDTTDRSPDAVAAAIQAVLDGDREPSAGTVDYTDYV.

Residues Gly-10, Gly-12, Lys-13, Thr-14, and Thr-15 each coordinate ATP. The NMP stretch occupies residues 28–51; sequence HLNDLVGTEGLYDGVDADRGSKIV. The tract at residues 98–108 is LID; the sequence is DRGDSPEKAAE. Arg-99 provides a ligand contact to ATP.

The protein belongs to the adenylate kinase family. AK6 subfamily. As to quaternary structure, interacts with uS11. Not a structural component of 40S pre-ribosomes, but transiently interacts with them by binding to uS11.

The catalysed reaction is AMP + ATP = 2 ADP. It catalyses the reaction ATP + H2O = ADP + phosphate + H(+). Its function is as follows. Broad-specificity nucleoside monophosphate (NMP) kinase that catalyzes the reversible transfer of the terminal phosphate group between nucleoside triphosphates and monophosphates. Also has ATPase activity. Involved in the late maturation steps of the 30S ribosomal particles, specifically 16S rRNA maturation. While NMP activity is not required for ribosome maturation, ATPase activity is. Associates transiently with small ribosomal subunit protein uS11. ATP hydrolysis breaks the interaction with uS11. May temporarily remove uS11 from the ribosome to enable a conformational change of the ribosomal RNA that is needed for the final maturation step of the small ribosomal subunit. The protein is Putative adenylate kinase of Halobacterium salinarum (strain ATCC 29341 / DSM 671 / R1).